Consider the following 903-residue polypeptide: Protein translocase subunit SecA (903 aa).

Residues Gln-89, 107–111, and Asp-502 contribute to the ATP site; that span reads GEGKT. Residues Cys-887, Cys-889, Cys-898, and His-899 each coordinate Zn(2+).

It belongs to the SecA family. As to quaternary structure, monomer and homodimer. Part of the essential Sec protein translocation apparatus which comprises SecA, SecYEG and auxiliary proteins SecDF-YajC and YidC. Zn(2+) is required as a cofactor.

The protein localises to the cell inner membrane. It localises to the cytoplasm. The catalysed reaction is ATP + H2O + cellular proteinSide 1 = ADP + phosphate + cellular proteinSide 2.. Part of the Sec protein translocase complex. Interacts with the SecYEG preprotein conducting channel. Has a central role in coupling the hydrolysis of ATP to the transfer of proteins into and across the cell membrane, serving both as a receptor for the preprotein-SecB complex and as an ATP-driven molecular motor driving the stepwise translocation of polypeptide chains across the membrane. The chain is Protein translocase subunit SecA from Jannaschia sp. (strain CCS1).